The sequence spans 1008 residues: Envelopment polyprotein (1008 aa).

The signal sequence occupies residues 1–17 (MVRTYLLLLLLCGPATP). The Lumenal segment spans residues 18–394 (FFNHLMDVTR…NWANIHCFSK (377 aa)). N-linked (GlcNAc...) asparagine; by host glycans are attached at residues N34, N70, and N108. Cystine bridges form between C138/C269, C156/C166, C206/C247, C216/C226, C233/C238, C292/C295, C299/C368, and C319/C324. Residue N208 is glycosylated (N-linked (GlcNAc...) asparagine; by host). The chain crosses the membrane as a helical span at residues 395–415 (EQVLILVAVSSLCILLLASVL). Residues 416–496 (RALKVIATFT…VRQKMFNLTR (81 aa)) lie on the Cytoplasmic side of the membrane. Residues 419–465 (KVIATFTWKIIKPFWWILSLLCRTCSKRLNKRAERLKESIHSLEEGL) are golgi retention signal. The important for correct targeting of the glycoproteins to the Golgi complex but not for heterodimerization stretch occupies residues 461–465 (LEEGL). Residues 497–513 (LSPVVVGMLCLACPVES) form an internal signal sequence for glycoprotein C region. Cystine bridges form between C514/C555, C527/C537, C580/C677, C595/C789, C601/C650, C607/C657, C612/C639, C643/C648, C728/C742, C758/C771, C851/C924, and C861/C864. At 514–977 (CSDSISVTAS…GWFKASWLRA (464 aa)) the chain is on the lumenal side. A fusion loop region spans residues 601-607 (CHLMGAC). The interval 644–655 (GGALCQCFNMRP) is fusion loop. N-linked (GlcNAc...) asparagine; by host glycosylation is found at N691 and N696. 2 N-linked (GlcNAc...) asparagine; by host glycosylation sites follow: N912 and N949. A helical transmembrane segment spans residues 978–998 (IWAILGGTVSLIIGVVIIYMV). The Cytoplasmic portion of the chain corresponds to 999–1008 (FTLCLKVKKS).

Belongs to the phlebovirus envelope glycoprotein family. As to quaternary structure, homodimer. Heterodimer with glycoprotein C. Homotrimer (postfusion). In terms of assembly, heterodimer with glycoprotein N. Homotrimer (postfusion). Post-translationally, specific enzymatic cleavages in vivo yield mature proteins including glycoprotein C and glycoprotein N. In terms of processing, the cytoplasmic tail is Palmitoylated. Glycosylated. Contains principally poly-N-acetyllactosamine glycans. Post-translationally, glycosylated. Contains principally oligomannose-type glycans that can attach to host CD209/DC-SIGN. In terms of processing, palmitoylated.

The protein resides in the virion membrane. It is found in the host Golgi apparatus membrane. Its subcellular location is the host endoplasmic reticulum membrane. Its function is as follows. Structural component of the virion that interacts with glycoprotein C. It shields the hydrophobic fusion loops of the glycoprotein C, preventing premature fusion. The glycoprotein protrusions are arranged on an icosahedral lattice, with T=12 triangulation. They are able to attach the virion to the host cell receptor CD209/DC-SIGN and to promote fusion of membranes with the late endosome after endocytosis of the virion. Plays a role in the packaging of ribonucleoproteins during virus assembly. Functionally, structural component of the virion that interacts with glycoprotein N. Acts as a class II fusion protein that is activated upon acidification and subsequent repositioning of the glycoprotein N. The glycoprotein protrusions are arranged on an icosahedral lattice, with T=12 triangulation. They are able to attach the virion to the host cell receptor CD209/DC-SIGN and to promote fusion of membranes with the late endosome after endocytosis of the virion. The protein is Envelopment polyprotein (GP) of Homo sapiens (Human).